The primary structure comprises 323 residues: o-succinylbenzoate synthase (323 aa).

Residue K134 is the Proton donor of the active site. Mg(2+) contacts are provided by D162, E191, and D214. The Proton acceptor role is filled by K236.

This sequence belongs to the mandelate racemase/muconate lactonizing enzyme family. MenC type 1 subfamily. Requires a divalent metal cation as cofactor.

It catalyses the reaction (1R,6R)-6-hydroxy-2-succinyl-cyclohexa-2,4-diene-1-carboxylate = 2-succinylbenzoate + H2O. It functions in the pathway quinol/quinone metabolism; 1,4-dihydroxy-2-naphthoate biosynthesis; 1,4-dihydroxy-2-naphthoate from chorismate: step 4/7. It participates in quinol/quinone metabolism; menaquinone biosynthesis. Converts 2-succinyl-6-hydroxy-2,4-cyclohexadiene-1-carboxylate (SHCHC) to 2-succinylbenzoate (OSB). The sequence is that of o-succinylbenzoate synthase from Yersinia pseudotuberculosis serotype O:3 (strain YPIII).